The primary structure comprises 354 residues: Glycine betaine/proline betaine transport system permease protein ProW (354 aa).

Residues 1-41 (MADQNNPWDTTPAADSAAQSADAWGTPTTAPTDGGGADWLT) are disordered. At 1–99 (MADQNNPWDT…VDYILNGFQQ (99 aa)) the chain is on the cytoplasmic side. Low complexity predominate over residues 13 to 32 (AADSAAQSADAWGTPTTAPT). A helical membrane pass occupies residues 100 to 120 (LLLGMPAPVAIIVFALIAWQI). Ser-121 is a topological domain (periplasmic). The chain crosses the membrane as a helical span at residues 122 to 142 (GVGMGVATLVSLIAIGAIGAW). Residues 143-148 (SQAMVT) are Cytoplasmic-facing. Residues 145-324 (AMVTLALVLT…ILAIILDRLT (180 aa)) form the ABC transmembrane type-1 domain. The helical transmembrane segment at 149-169 (LALVLTALLFCIVIGLPLGIW) threads the bilayer. The Periplasmic segment spans residues 170–198 (LARSPRAAKIIRPLLDAMQTTPAFVYLVP). Residues 199–219 (IVMLFGIGNVPGVVVTIIFAL) form a helical membrane-spanning segment. Residues 220-270 (PPIIRLTILGINQVPADLIEASRSFGASPRQMLFKVQLPLAMPTIMAGVNQ) are Cytoplasmic-facing. Residues 271 to 291 (TLMLALSMVVIASMIAVGGLG) traverse the membrane as a helical segment. Residues 292–300 (QMVLRGIGR) lie on the Periplasmic side of the membrane. A helical transmembrane segment spans residues 301-321 (LDMGLATVGGVGIVILAIILD). Over 322 to 354 (RLTQAVGRDSRSRGNRRWYTTGPVGLLTRPFIK) the chain is Cytoplasmic.

It belongs to the binding-protein-dependent transport system permease family. CysTW subfamily. In terms of assembly, the complex is composed of two ATP-binding proteins (ProV), two transmembrane proteins (ProW) and a solute-binding protein (ProX).

It localises to the cell inner membrane. Its function is as follows. Part of the ProU ABC transporter complex involved in glycine betaine and proline betaine uptake. Probably responsible for the translocation of the substrate across the membrane. The sequence is that of Glycine betaine/proline betaine transport system permease protein ProW from Escherichia coli (strain K12).